We begin with the raw amino-acid sequence, 374 residues long: LRR repeats and ubiquitin-like domain-containing protein At2g30105 (374 aa).

The 75-residue stretch at 13–87 folds into the Ubiquitin-like domain; sequence IKLTVKFGGK…LMLMASQGLH (75 aa). 9 LRR repeats span residues 128 to 151, 152 to 175, 177 to 200, 201 to 224, 225 to 248, 250 to 270, 272 to 293, 294 to 316, and 318 to 340; these read WKAT…VWDC, GSGV…ISSF, SMQK…GIAS, LKRL…MGSL, TSLR…GLLT, LEIL…IGNC, FLME…FTKL, RNLK…LFKM, and LQLS…QFEG.

In Arabidopsis thaliana (Mouse-ear cress), this protein is LRR repeats and ubiquitin-like domain-containing protein At2g30105.